A 998-amino-acid polypeptide reads, in one-letter code: Bifunctional glutamine synthetase adenylyltransferase/adenylyl-removing enzyme (998 aa).

Positions 1–487 are adenylyl removase; sequence MVVTKPATQR…LHAKLFYQPL (487 aa). The adenylyl transferase stretch occupies residues 492–998; the sequence is GPAGLEIRHG…KAVVRKVFGS (507 aa).

It belongs to the GlnE family. Mg(2+) serves as cofactor.

It carries out the reaction [glutamine synthetase]-O(4)-(5'-adenylyl)-L-tyrosine + phosphate = [glutamine synthetase]-L-tyrosine + ADP. The catalysed reaction is [glutamine synthetase]-L-tyrosine + ATP = [glutamine synthetase]-O(4)-(5'-adenylyl)-L-tyrosine + diphosphate. In terms of biological role, involved in the regulation of glutamine synthetase GlnA, a key enzyme in the process to assimilate ammonia. When cellular nitrogen levels are high, the C-terminal adenylyl transferase (AT) inactivates GlnA by covalent transfer of an adenylyl group from ATP to specific tyrosine residue of GlnA, thus reducing its activity. Conversely, when nitrogen levels are low, the N-terminal adenylyl removase (AR) activates GlnA by removing the adenylyl group by phosphorolysis, increasing its activity. The regulatory region of GlnE binds the signal transduction protein PII (GlnB) which indicates the nitrogen status of the cell. This is Bifunctional glutamine synthetase adenylyltransferase/adenylyl-removing enzyme from Mycobacterium avium (strain 104).